The primary structure comprises 299 residues: Endonuclease 4 (299 aa).

The signal sequence occupies residues 1-24 (MSSSLRQWFARVLVLTQLINGALC). Residues Trp25 and His30 each coordinate a divalent metal cation. 25 to 30 (WGKEGH) lines the substrate pocket. The cysteines at positions 34 and 65 are disulfide-linked. The a divalent metal cation site is built by Asp69 and His84. Residues 69–75 (DEIKHHW), 84–87 (HYVD), and 94–99 (NYEYCR) contribute to the substrate site. 3 cysteine pairs are disulfide-bonded: Cys93-Cys246, Cys101-Cys111, and Cys226-Cys233. Asn118 and Tyr136 together coordinate substrate. Asn118 carries an N-linked (GlcNAc...) asparagine glycan. N-linked (GlcNAc...) asparagine glycosylation is present at Asn137. A divalent metal cation-binding residues include His147, Asp151, His157, His181, and Asp185. The substrate binding stretch occupies residues 147 to 196 (HFIGDIHQPLHVGFLGDEGGNTITVRWYRRKTNLHHVWDNMIIESALKTY). N-linked (GlcNAc...) asparagine glycosylation is found at Asn198, Asn211, and Asn229. The propeptide at 284 to 299 (ATLNRIFSSKPKHAGS) is removed in mature form.

This sequence belongs to the nuclease type I family. As to quaternary structure, monomer. The cofactor is Mn(2+). It depends on Ca(2+) as a cofactor.

The enzyme catalyses Endonucleolytic cleavage to 5'-phosphomononucleotide and 5'-phosphooligonucleotide end-products.. In terms of biological role, endonuclease that can use single-stranded RNA and DNA as substrates. In contradiction with PubMed:23620482, cannot hydrolyze single-stranded DNA and does not cleave mismatches. This is Endonuclease 4 from Arabidopsis thaliana (Mouse-ear cress).